A 140-amino-acid polypeptide reads, in one-letter code: 6,7-dimethyl-8-ribityllumazine synthase (140 aa).

5-amino-6-(D-ribitylamino)uracil-binding positions include Phe-11, 42–44 (ALE), and 66–68 (VVI). A (2S)-2-hydroxy-3-oxobutyl phosphate-binding site is contributed by 71 to 72 (ET). Residue His-74 is the Proton donor of the active site. Asn-98 contacts 5-amino-6-(D-ribitylamino)uracil. (2S)-2-hydroxy-3-oxobutyl phosphate is bound at residue Arg-112.

Belongs to the DMRL synthase family.

It catalyses the reaction (2S)-2-hydroxy-3-oxobutyl phosphate + 5-amino-6-(D-ribitylamino)uracil = 6,7-dimethyl-8-(1-D-ribityl)lumazine + phosphate + 2 H2O + H(+). The protein operates within cofactor biosynthesis; riboflavin biosynthesis; riboflavin from 2-hydroxy-3-oxobutyl phosphate and 5-amino-6-(D-ribitylamino)uracil: step 1/2. Functionally, catalyzes the formation of 6,7-dimethyl-8-ribityllumazine by condensation of 5-amino-6-(D-ribitylamino)uracil with 3,4-dihydroxy-2-butanone 4-phosphate. This is the penultimate step in the biosynthesis of riboflavin. This chain is 6,7-dimethyl-8-ribityllumazine synthase, found in Erythrobacter litoralis (strain HTCC2594).